Reading from the N-terminus, the 325-residue chain is Probable WRKY transcription factor 11 (325 aa).

Positions 240–306 (KIADIPPDEY…YEGEHRHNQS (67 aa)) form a DNA-binding region, WRKY.

The protein belongs to the WRKY group II-d family. As to expression, in young, mature and senescent leaves.

The protein localises to the nucleus. Transcription factor. Interacts specifically with the W box (5'-(T)TGAC[CT]-3'), a frequently occurring elicitor-responsive cis-acting element. Regulates rhizobacterium B.cereus AR156-induced systemic resistance (ISR) to P.syringae pv. tomato DC3000, probably by activating the jasmonic acid (JA)- signaling pathway. This chain is Probable WRKY transcription factor 11 (WRKY11), found in Arabidopsis thaliana (Mouse-ear cress).